The chain runs to 371 residues: Monomethylxanthine methyltransferase 2 (371 aa).

S-adenosyl-L-homocysteine is bound by residues Y18, C61, N66, D100, L101, S139, F140, and C156. Theobromine is bound by residues Y157, H160, and W161. Positions 178, 260, 262, and 263 each coordinate Mg(2+). A theobromine-binding site is contributed by Y355.

Belongs to the methyltransferase superfamily. Type-7 methyltransferase family. The cofactor is Mg(2+).

The catalysed reaction is 7-methylxanthine + S-adenosyl-L-methionine = theobromine + S-adenosyl-L-homocysteine + H(+). It participates in alkaloid biosynthesis. In terms of biological role, involved in the biosynthesis of caffeine. Catalyzes the conversion of 7-methylxanthine (7mX) to theobromine and with a lower activity of paraxanthine to caffeine. This chain is Monomethylxanthine methyltransferase 2, found in Coffea canephora (Robusta coffee).